A 1196-amino-acid chain; its full sequence is MEESPPKQKSNTKVTQHEGQQDLNTTRHMNVELKHRPKLERHLKLGMIPVVYMKQGEEILYPAQSLREENLIQNFTSLLLLQKLCPKDPENMVRKSWASCVPEEGGHMINIQDLFGPNIGTQKEPQLVIIEGAAGIGKSTLARLVKRAWKEGQLYRDHFQHVFFFSCRELAQCKKLSLAELIAQGQEVPTAPINQILSHPEKLLFILDGIDEPAWVLADQNPELCLHWSQRQPVHTLLGSLLGKSIFPEAFFLLTTRTTALQKFIPSLPMPCQVEVLGFSGIERENYFYKYFANQRHAITAFMMVESNPVLLTLCEVPWVCWLVCTCLKKQMEQGRVLSLKSQTTTALCLKYLSLTIPDKHRRTQVKALCSLAAEGIWKRRTLFSESDLCKQGLDEDAVATFLKTGVLQKQASSLSYSFAHLCLQEFFAAISCILEDSEERHGNMEMDRIVETLVERYGRQNLFEAPTVRFLFGLLGKEGVKGMEKLFSCSLHGKTNLKLLWHILVKSQPHQPPCLGLLHCLYENQDMELLTHVMHDLQGTIVPGPNDIAHTVLQTNVKHLVVQTDMELMVATFCIQFYCHVRTLQLNMEKQQGYALISPRMVLYRWTPITNASWEILFYNLKFTRNLEGLDLSGNSLRYSVVQSLCNTLRYPGCQLKTLWLVKCGLTSRHCSLLASVLSAHSSLTELYLQLNDLGDDGVRMLCEGLRNPVCNLSILWLDLYSLSAQVITELRTLEEKNPKLYIRSIWMPHMMVPTENMDEEAILTTFKQQRQEPGDKPMEILGTEEDFWGPTGPVATELVDRVRNLYRVQLPMAGSYHCPSTGLHFVVTRAVTIEIEFCAWSQFLDKTPLQQSHMVVGPLFDIKAEQGAVTAVYLPHFVSLKDTEASTFDFKVAHFQEHGMVLETPDRVKPGYTVLKNPSFSPMGVVLRIIPAARHFIPITSITLIYYRLNLEEVTLHLYLVPNDCTIQKAIDDEEMKFQFVRINKPPPVDNLFIGSRYIVSGSENLEITPKELELCYRSSKEFQLFSEIYVGNMGSEIKLQIKNKKHMKLIWEALLKPEFKFDHLCDQEFCTILKNIMISPAGDLRPALPRIAQALKDAPSLLHFMDQHREQLVARVTSVDPLLDKLHGLVLNEESYEAVRAENTNQDKMRKLFNLSRSWSRACKDLFYQALKETHPHLVMDLFEKSGGVSLGS.

Positions 1-22 (MEESPPKQKSNTKVTQHEGQQD) are disordered. Residues 126-435 (QLVIIEGAAG…EFFAAISCIL (310 aa)) enclose the NACHT domain. 132-139 (GAAGIGKS) is a binding site for ATP. LRR repeat units follow at residues 627 to 647 (NLEGLDLSGNSLRYSVVQSLC) and 684 to 704 (SLTELYLQLNDLGDDGVRMLC). The ZU5 stretch occupies residues 789-922 (FWGPTGPVAT…GYTVLKNPSF (134 aa)). The FIIND domain maps to 789 to 1072 (FWGPTGPVAT…KFDHLCDQEF (284 aa)). Residues 923-1072 (SPMGVVLRII…KFDHLCDQEF (150 aa)) form a UPA region. In terms of domain architecture, CARD spans 1106–1189 (HFMDQHREQL…HLVMDLFEKS (84 aa)).

It belongs to the NLRP family. In terms of assembly, interacts with DPP9; leading to inhibit activation of the inflammasome. DPP9 acts via formation of a ternary complex, composed of a DPP9 homodimer, one full-length Nlrp1b protein, and one cleaved C-terminus of Nlrp1b (NACHT, LRR and PYD domains-containing protein 1b, C-terminus). Interacts with DPP8; leading to inhibit activation of the inflammasome, probably via formation of a ternary complex with DPP8. Interacts (via LRR repeats) with BCL2 and BCL2L1 (via the loop between motifs BH4 and BH3). Interacts with NOD2; this interaction may increase IL1B release. Interacts with EIF2AK2/PKR; this interaction requires EIF2AK2 activity, is accompanied by EIF2AK2 autophosphorylation and promotes inflammasome assembly in response to B.anthracis lethal toxin. Interacts with MEFV; this interaction targets Nlrp1b to degradation by autophagy, hence preventing excessive IL1B- and IL18-mediated inflammation. As to quaternary structure, interacts with the C-terminal part of Nlrp1b (NACHT, LRR and PYD domains-containing protein 1b, C-terminus) in absence of pathogens and other damage-associated signals. Interacts with the N-terminal part of Nlrp1b (NACHT, LRR and PYD domains-containing protein 1b, N-terminus) in absence of pathogens and other damage-associated signals. Homomultimer; forms the Nlrp1b inflammasome polymeric complex, a filament composed of homopolymers of this form in response to pathogens and other damage-associated signals. The Nlrp1b inflammasome polymeric complex directly recruits pro-caspase-1 (proCASP1) independently of PYCARD/ASC. Interacts (via CARD domain) with CASP1 (via CARD domain); leading to CASP1 activation. In terms of processing, autocatalytically cleaved. Autocatalytic cleavage in FIIND region occurs constitutively, prior to activation signals, and is required for inflammasome activity (IL1B release), possibly by facilitating CASP1 binding. Both N- and C-terminal parts remain associated non-covalently. Ubiquitinated by the N-end rule pathway in response to pathogens and other damage-associated signals, leading to its degradation by the proteasome and subsequent release of the cleaved C-terminal part of the protein (NACHT, LRR and PYD domains-containing protein 1b, C-terminus), which polymerizes and forms the Nlrp1b inflammasome. Post-translationally, (Microbial infection) Cleavage by B.anthracis lethal toxin (LT) endopeptidase promotes ubiquitination and degradation of the N-terminal part, releasing the cleaved C-terminal part of the protein (NACHT, LRR and PYD domains-containing protein 1b, C-terminus), which polymerizes and forms the Nlrp1b inflammasome. Expressed in macrophages.

The protein localises to the cytoplasm. It is found in the cytosol. Its subcellular location is the inflammasome. Activated by cleavage by B.anthracis lethal toxin (LT) endopeptidase. Cleavage by LT promotes ubiquitination and degradation of the N-terminal part, releasing the cleaved C-terminal part of the protein (NACHT, LRR and PYD domains-containing protein 1b, C-terminus), which polymerizes and forms the Nlrp1b inflammasome. Nlrp1b inflammasome is inhibited by DPP8 and DPP9, which sequester the C-terminal fragment of Nlrp1b (NACHT, LRR and PYD domains-containing protein 1b, C-terminus) in a ternary complex, thereby preventing Nlrp1b oligomerization and activation. Nlrp1b inflammasome is activated by Val-boroPro (Talabostat, PT-100), an inhibitor of dipeptidyl peptidases DPP8 and DPP9. Val-boroPro relieves inhibition of DPP8 and/or DPP9 by promoting disruption of the ternary complex, releasing its C-terminal part from autoinhibition. Activated by metabolic inhibitors, such as 2-deoxy-D-glucose and sodium azide. Not activated by muramyl dipeptide, nor by full-length bacterial peptidoglycan. Its function is as follows. Acts as the sensor component of the Nlrp1b inflammasome, which mediates inflammasome activation in response to various pathogen-associated signals, leading to subsequent pyroptosis. Inflammasomes are supramolecular complexes that assemble in the cytosol in response to pathogens and other damage-associated signals and play critical roles in innate immunity and inflammation. Acts as a recognition receptor (PRR): recognizes specific pathogens and other damage-associated signals, such as B.anthracis lethal toxin (LT) or Val-boroPro inhibitor, and mediates the formation of the inflammasome polymeric complex. In response to pathogen-associated signals, the N-terminal part of Nlrp1b is degraded by the proteasome, releasing the cleaved C-terminal part of the protein (NACHT, LRR and PYD domains-containing protein 1b, C-terminus), which polymerizes to initiate the formation of the inflammasome complex: the inflammasome directly recruits pro-caspase-1 (proCASP1) independently of PYCARD/ASC and promotes caspase-1 (CASP1) activation, which subsequently cleaves and activates inflammatory cytokines IL1B and IL18 and gasdermin-D (GSDMD), leading to pyroptosis. In the absence of GSDMD expression, the Nlrp1b inflammasome is able to recruit and activate CASP8, leading to activation of gasdermin-E (GSDME). Activation of Nlrp1b inflammasome is also required for HMGB1 secretion; the active cytokines and HMGB1 stimulate inflammatory responses. Primary mediator of macrophage susceptibility to B.anthracis LT: in response to B.anthracis infection, macrophages and dendritic cells release IL1B and undergo pyroptosis. This early inflammatory response to the toxin increases resistance to infection by B.anthracis spores. Constitutes the precursor of the Nlrp1b inflammasome, which mediates autoproteolytic processing within the FIIND domain to generate the N-terminal and C-terminal parts, which are associated non-covalently in absence of pathogens and other damage-associated signals. In terms of biological role, regulatory part that prevents formation of the Nlrp1b inflammasome: in absence of pathogens and other damage-associated signals, interacts with the C-terminal part of Nlrp1b (NACHT, LRR and PYD domains-containing protein 1b, C-terminus), preventing activation of the Nlrp1b inflammasome. In response to pathogen-associated signals, this part is ubiquitinated by the N-end rule pathway and degraded by the proteasome, releasing the cleaved C-terminal part of the protein, which polymerizes and forms the Nlrp1b inflammasome. Functionally, constitutes the active part of the Nlrp1b inflammasome. In absence of pathogens and other damage-associated signals, interacts with the N-terminal part of Nlrp1b (NACHT, LRR and PYD domains-containing protein 1b, N-terminus), preventing activation of the Nlrp1b inflammasome. In response to pathogen-associated signals, the N-terminal part of Nlrp1b is degraded by the proteasome, releasing this form, which polymerizes to form the Nlrp1b inflammasome complex: the Nlrp1b inflammasome complex then directly recruits pro-caspase-1 (proCASP1) and promotes caspase-1 (CASP1) activation, leading to gasdermin-D (GSDMD) cleavage and subsequent pyroptosis. The polypeptide is NACHT, LRR and PYD domains-containing protein 1b allele 5 (Nlrp1b) (Mus musculus (Mouse)).